Here is a 207-residue protein sequence, read N- to C-terminus: LexA repressor (207 aa).

The segment at residues 28-48 (VREIGEAVGLASSSTVHGHLA) is a DNA-binding region (H-T-H motif). Catalysis depends on for autocatalytic cleavage activity residues Ser-129 and Lys-167.

Belongs to the peptidase S24 family. As to quaternary structure, homodimer.

The catalysed reaction is Hydrolysis of Ala-|-Gly bond in repressor LexA.. Its function is as follows. Represses a number of genes involved in the response to DNA damage (SOS response), including recA and lexA. In the presence of single-stranded DNA, RecA interacts with LexA causing an autocatalytic cleavage which disrupts the DNA-binding part of LexA, leading to derepression of the SOS regulon and eventually DNA repair. The protein is LexA repressor of Geobacillus kaustophilus (strain HTA426).